We begin with the raw amino-acid sequence, 278 residues long: MLEIAGKKFDSHLIMGTGGATSQTLLEKALVASGTQLTTVAMRRFRAGNTPSTAGASNGAAGGESVFGLLNRLGIDVLPNTAGCRTAKDAILTAQLAREALGTNWVKLELIADDRTLLPDVVELVDTCEMLVANGFEVLAYTSDDPVVAKRLEDAGAAAVMPLGSPIGTGLGILNPHNIELICARASVPVLLDAGVGTTSDAALAMELGCSGVLLASAVNRCQDPVAMATAMRHAVEAGRLAAAAGRIPKRTHAQGALASSSFEGLASWDEDWAEEVL.

The Schiff-base intermediate with DXP role is filled by lysine 107. 1-deoxy-D-xylulose 5-phosphate contacts are provided by residues glycine 168, alanine 194–glycine 195, and alanine 216–serine 217.

This sequence belongs to the ThiG family. As to quaternary structure, homotetramer. Forms heterodimers with either ThiH or ThiS.

The protein localises to the cytoplasm. The catalysed reaction is [ThiS sulfur-carrier protein]-C-terminal-Gly-aminoethanethioate + 2-iminoacetate + 1-deoxy-D-xylulose 5-phosphate = [ThiS sulfur-carrier protein]-C-terminal Gly-Gly + 2-[(2R,5Z)-2-carboxy-4-methylthiazol-5(2H)-ylidene]ethyl phosphate + 2 H2O + H(+). It functions in the pathway cofactor biosynthesis; thiamine diphosphate biosynthesis. Its function is as follows. Catalyzes the rearrangement of 1-deoxy-D-xylulose 5-phosphate (DXP) to produce the thiazole phosphate moiety of thiamine. Sulfur is provided by the thiocarboxylate moiety of the carrier protein ThiS. In vitro, sulfur can be provided by H(2)S. This Corynebacterium jeikeium (strain K411) protein is Thiazole synthase.